Reading from the N-terminus, the 110-residue chain is Iron-sulfur cluster assembly protein CyaY (110 aa).

The protein belongs to the frataxin family.

Involved in iron-sulfur (Fe-S) cluster assembly. May act as a regulator of Fe-S biogenesis. This is Iron-sulfur cluster assembly protein CyaY from Ectopseudomonas mendocina (strain ymp) (Pseudomonas mendocina).